A 101-amino-acid chain; its full sequence is Acylphosphatase (101 aa).

In terms of domain architecture, Acylphosphatase-like spans 11 to 99 (SWLVKAIGRV…PRLNRFDRLP (89 aa)). Residues arginine 26 and asparagine 44 contribute to the active site.

It belongs to the acylphosphatase family.

The catalysed reaction is an acyl phosphate + H2O = a carboxylate + phosphate + H(+). This is Acylphosphatase (acyP) from Polaromonas naphthalenivorans (strain CJ2).